The chain runs to 378 residues: Probable pectin lyase C (378 aa).

A signal peptide spans 1–18; that stretch reads MKVPFLQLLCLNAALASA. Disulfide bonds link Cys81–Cys100 and Cys90–Cys220. Residue Asn123 is glycosylated (N-linked (GlcNAc...) asparagine). Arg250 is an active-site residue. Cys316 and Cys324 are oxidised to a cystine.

The protein belongs to the polysaccharide lyase 1 family.

The protein resides in the secreted. It catalyses the reaction Eliminative cleavage of (1-&gt;4)-alpha-D-galacturonan methyl ester to give oligosaccharides with 4-deoxy-6-O-methyl-alpha-D-galact-4-enuronosyl groups at their non-reducing ends.. Pectinolytic enzymes consist of four classes of enzymes: pectin lyase, polygalacturonase, pectin methylesterase and rhamnogalacturonase. Among pectinolytic enzymes, pectin lyase is the most important in depolymerization of pectin, since it cleaves internal glycosidic bonds of highly methylated pectins. The chain is Probable pectin lyase C (pelC) from Aspergillus niger.